The chain runs to 158 residues: Transcription elongation factor GreA (158 aa).

Positions 47–74 (AEYHAAKEEQSHNEGRIAELEDKLARAD) form a coiled coil.

The protein belongs to the GreA/GreB family.

In terms of biological role, necessary for efficient RNA polymerase transcription elongation past template-encoded arresting sites. The arresting sites in DNA have the property of trapping a certain fraction of elongating RNA polymerases that pass through, resulting in locked ternary complexes. Cleavage of the nascent transcript by cleavage factors such as GreA or GreB allows the resumption of elongation from the new 3'terminus. GreA releases sequences of 2 to 3 nucleotides. The polypeptide is Transcription elongation factor GreA (Bradyrhizobium sp. (strain BTAi1 / ATCC BAA-1182)).